The primary structure comprises 492 residues: 2,3-bisphosphoglycerate-independent phosphoglycerate mutase (492 aa).

Positions 11 and 61 each coordinate Mn(2+). Catalysis depends on serine 61, which acts as the Phosphoserine intermediate. Substrate-binding positions include histidine 118, 147–148 (RD), arginine 177, arginine 183, 248–251 (RSDR), and lysine 321. 5 residues coordinate Mn(2+): aspartate 387, histidine 391, aspartate 428, histidine 429, and histidine 446.

Belongs to the BPG-independent phosphoglycerate mutase family. Monomer. Mn(2+) is required as a cofactor.

The enzyme catalyses (2R)-2-phosphoglycerate = (2R)-3-phosphoglycerate. It functions in the pathway carbohydrate degradation; glycolysis; pyruvate from D-glyceraldehyde 3-phosphate: step 3/5. In terms of biological role, catalyzes the interconversion of 2-phosphoglycerate and 3-phosphoglycerate. The sequence is that of 2,3-bisphosphoglycerate-independent phosphoglycerate mutase from Wolinella succinogenes (strain ATCC 29543 / DSM 1740 / CCUG 13145 / JCM 31913 / LMG 7466 / NCTC 11488 / FDC 602W) (Vibrio succinogenes).